A 425-amino-acid chain; its full sequence is Kynurenine/alpha-aminoadipate aminotransferase, mitochondrial (425 aa).

The transit peptide at 1-29 directs the protein to the mitochondrion; the sequence is MNYARFITAASAARNPSPIRTMTDILSRG. Arg20 is a substrate binding site. N6-acetyllysine is present on Lys69. Residues Tyr74 and Tyr142 each coordinate substrate. Lys179 is modified (N6-acetyllysine). The tract at residues 181–208 is disordered; that stretch reads EDAKNPQKNTPKFLYTVPNGNNPTGNSL. A compositionally biased stretch (polar residues) spans 198 to 208; sequence PNGNNPTGNSL. Position 202 (Asn202) interacts with substrate. Position 263 is an N6-(pyridoxal phosphate)lysine; alternate (Lys263). Lys263, Lys339, and Lys367 each carry N6-acetyllysine; alternate. N6-succinyllysine; alternate is present on residues Lys263, Lys339, and Lys367. Arg399 is a binding site for substrate. Lys422 carries the N6-acetyllysine modification.

The protein belongs to the class-I pyridoxal-phosphate-dependent aminotransferase family. Homodimer. Pyridoxal 5'-phosphate serves as cofactor. Higher expression in the liver. Also found in heart, brain, kidney, pancreas, prostate, testis and ovary.

Its subcellular location is the mitochondrion. It carries out the reaction glycine + 2-oxoglutarate = glyoxylate + L-glutamate. The catalysed reaction is L-kynurenine + 2-oxoglutarate = kynurenate + L-glutamate + H2O. It catalyses the reaction L-kynurenine + glyoxylate = kynurenate + glycine + H2O. The enzyme catalyses 3-hydroxy-L-kynurenine + glyoxylate = xanthurenate + glycine + H2O. It carries out the reaction 2-oxohexanoate + L-kynurenine = L-2-aminohexanoate + kynurenate + H2O. The catalysed reaction is 3-phenylpyruvate + L-kynurenine = kynurenate + L-phenylalanine + H2O. It catalyses the reaction 4-methylsulfanyl-2-oxobutanoate + L-kynurenine = kynurenate + L-methionine + H2O. The enzyme catalyses 2-oxo-3-sulfanylpropanoate + L-kynurenine = kynurenate + L-cysteine + H2O. It carries out the reaction indole-3-pyruvate + L-kynurenine = kynurenate + L-tryptophan + H2O. The catalysed reaction is 2-oxopentanoate + L-kynurenine = L-2-aminopentanoate + kynurenate + H2O. It catalyses the reaction 4-methyl-2-oxopentanoate + L-kynurenine = kynurenate + L-leucine + H2O. The enzyme catalyses L-2-aminoadipate + 2-oxoglutarate = 2-oxoadipate + L-glutamate. It carries out the reaction glyoxylate + L-methionine = 4-methylsulfanyl-2-oxobutanoate + glycine. The catalysed reaction is L-2-aminoadipate + glyoxylate = 2-oxoadipate + glycine. It catalyses the reaction L-tyrosine + glyoxylate = 3-(4-hydroxyphenyl)pyruvate + glycine. The enzyme catalyses glyoxylate + L-phenylalanine = 3-phenylpyruvate + glycine. It carries out the reaction L-tryptophan + glyoxylate = indole-3-pyruvate + glycine. The catalysed reaction is L-leucine + glyoxylate = 4-methyl-2-oxopentanoate + glycine. It catalyses the reaction 2-oxobutanoate + L-kynurenine = (2S)-2-aminobutanoate + kynurenate + H2O. The enzyme catalyses 2-oxoadipate + L-kynurenine = L-2-aminoadipate + kynurenate + H2O. It participates in amino-acid degradation; L-lysine degradation via saccharopine pathway; glutaryl-CoA from L-lysine: step 4/6. Its activity is regulated as follows. Kynurenine transaminase activity is competitively inhibited by aminoadipate, asparagine, glutamate, histidine, cysteine, lysine, 3-hydroxy-kynurenine and phenylalanine. Functionally, transaminase with broad substrate specificity. Has transaminase activity towards aminoadipate, kynurenine, methionine and glutamate. Shows activity also towards tryptophan, aspartate and hydroxykynurenine. Accepts a variety of oxo-acids as amino-group acceptors, with a preference for 2-oxoglutarate, 2-oxocaproic acid, phenylpyruvate and alpha-oxo-gamma-methiol butyric acid. Can also use glyoxylate as amino-group acceptor (in vitro). This is Kynurenine/alpha-aminoadipate aminotransferase, mitochondrial from Homo sapiens (Human).